The chain runs to 208 residues: Protein-L-isoaspartate O-methyltransferase (208 aa).

Ser59 is an active-site residue.

It belongs to the methyltransferase superfamily. L-isoaspartyl/D-aspartyl protein methyltransferase family.

Its subcellular location is the cytoplasm. It catalyses the reaction [protein]-L-isoaspartate + S-adenosyl-L-methionine = [protein]-L-isoaspartate alpha-methyl ester + S-adenosyl-L-homocysteine. Catalyzes the methyl esterification of L-isoaspartyl residues in peptides and proteins that result from spontaneous decomposition of normal L-aspartyl and L-asparaginyl residues. It plays a role in the repair and/or degradation of damaged proteins. The sequence is that of Protein-L-isoaspartate O-methyltransferase from Vibrio atlanticus (strain LGP32) (Vibrio splendidus (strain Mel32)).